Reading from the N-terminus, the 145-residue chain is UPF0735 ACT domain-containing protein CLL_A2896 (145 aa).

An ACT domain is found at 69 to 144; it reads TFNLIVKDQT…YVEKIEFVAM (76 aa).

The protein belongs to the UPF0735 family.

This is UPF0735 ACT domain-containing protein CLL_A2896 from Clostridium botulinum (strain Eklund 17B / Type B).